The chain runs to 312 residues: DNA-directed RNA polymerase subunit alpha (312 aa).

Positions 1–226 (MIEFEKPNIT…EHFKVFMSTD (226 aa)) are alpha N-terminal domain (alpha-NTD). The alpha C-terminal domain (alpha-CTD) stretch occupies residues 243–312 (NEKKLEMTIE…ELGLSLRQDD (70 aa)).

The protein belongs to the RNA polymerase alpha chain family. Homodimer. The RNAP catalytic core consists of 2 alpha, 1 beta, 1 beta' and 1 omega subunit. When a sigma factor is associated with the core the holoenzyme is formed, which can initiate transcription.

It carries out the reaction RNA(n) + a ribonucleoside 5'-triphosphate = RNA(n+1) + diphosphate. In terms of biological role, DNA-dependent RNA polymerase catalyzes the transcription of DNA into RNA using the four ribonucleoside triphosphates as substrates. The polypeptide is DNA-directed RNA polymerase subunit alpha (Lactobacillus gasseri (strain ATCC 33323 / DSM 20243 / BCRC 14619 / CIP 102991 / JCM 1131 / KCTC 3163 / NCIMB 11718 / NCTC 13722 / AM63)).